A 62-amino-acid chain; its full sequence is Photosystem II reaction center protein Z (62 aa).

2 helical membrane-spanning segments follow: residues 8–28 (AVFALIATSSILLISVPVVFA) and 41–61 (FSGTSLWITLVFLVGILNSLI).

Belongs to the PsbZ family. In terms of assembly, PSII is composed of 1 copy each of membrane proteins PsbA, PsbB, PsbC, PsbD, PsbE, PsbF, PsbH, PsbI, PsbJ, PsbK, PsbL, PsbM, PsbT, PsbY, PsbZ, Psb30/Ycf12, at least 3 peripheral proteins of the oxygen-evolving complex and a large number of cofactors. It forms dimeric complexes.

The protein resides in the plastid. Its subcellular location is the chloroplast thylakoid membrane. In terms of biological role, may control the interaction of photosystem II (PSII) cores with the light-harvesting antenna, regulates electron flow through the 2 photosystem reaction centers. PSII is a light-driven water plastoquinone oxidoreductase, using light energy to abstract electrons from H(2)O, generating a proton gradient subsequently used for ATP formation. This chain is Photosystem II reaction center protein Z, found in Morus indica (Mulberry).